The sequence spans 100 residues: Small ribosomal subunit protein uS14c (100 aa).

Belongs to the universal ribosomal protein uS14 family. As to quaternary structure, part of the 30S ribosomal subunit.

It localises to the plastid. The protein resides in the chloroplast. Its function is as follows. Binds 16S rRNA, required for the assembly of 30S particles. The protein is Small ribosomal subunit protein uS14c of Porphyra purpurea (Red seaweed).